The sequence spans 144 residues: Large ribosomal subunit protein uL16 (144 aa).

The protein belongs to the universal ribosomal protein uL16 family. As to quaternary structure, part of the 50S ribosomal subunit.

Binds 23S rRNA and is also seen to make contacts with the A and possibly P site tRNAs. The polypeptide is Large ribosomal subunit protein uL16 (Latilactobacillus sakei subsp. sakei (strain 23K) (Lactobacillus sakei subsp. sakei)).